A 337-amino-acid polypeptide reads, in one-letter code: Glyceraldehyde-3-phosphate dehydrogenase (337 aa).

NAD(+) contacts are provided by residues 12–13 (RI), Asp34, and Lys79. Residues 150–152 (SCT), Thr181, 210–211 (TG), and Arg233 contribute to the D-glyceraldehyde 3-phosphate site. The active-site Nucleophile is the Cys151. Position 315 (Asn315) interacts with NAD(+).

It belongs to the glyceraldehyde-3-phosphate dehydrogenase family. As to quaternary structure, homotetramer.

Its subcellular location is the cytoplasm. The catalysed reaction is D-glyceraldehyde 3-phosphate + phosphate + NAD(+) = (2R)-3-phospho-glyceroyl phosphate + NADH + H(+). Its pathway is carbohydrate degradation; glycolysis; pyruvate from D-glyceraldehyde 3-phosphate: step 1/5. The sequence is that of Glyceraldehyde-3-phosphate dehydrogenase (GPD) from Phanerodontia chrysosporium (White-rot fungus).